Consider the following 462-residue polypeptide: Cysteine--tRNA ligase (462 aa).

Position 24 (cysteine 24) interacts with Zn(2+). Positions proline 26 to histidine 36 match the 'HIGH' region motif. The Zn(2+) site is built by cysteine 199, histidine 224, and glutamate 228. The 'KMSKS' region signature appears at lysine 256 to serine 260. Lysine 259 is a binding site for ATP.

The protein belongs to the class-I aminoacyl-tRNA synthetase family. As to quaternary structure, monomer. Requires Zn(2+) as cofactor.

The protein resides in the cytoplasm. The catalysed reaction is tRNA(Cys) + L-cysteine + ATP = L-cysteinyl-tRNA(Cys) + AMP + diphosphate. This Campylobacter jejuni subsp. doylei (strain ATCC BAA-1458 / RM4099 / 269.97) protein is Cysteine--tRNA ligase.